Reading from the N-terminus, the 429-residue chain is Argininosuccinate lyase (429 aa).

The protein belongs to the lyase 1 family. Argininosuccinate lyase subfamily.

It localises to the cytoplasm. It carries out the reaction 2-(N(omega)-L-arginino)succinate = fumarate + L-arginine. Its pathway is amino-acid biosynthesis; L-arginine biosynthesis; L-arginine from L-ornithine and carbamoyl phosphate: step 3/3. The polypeptide is Argininosuccinate lyase (Pyrobaculum arsenaticum (strain DSM 13514 / JCM 11321 / PZ6)).